The sequence spans 162 residues: Small ribosomal subunit protein bS16 (162 aa).

The disordered stretch occupies residues 113–162; that stretch reads ADGGPTTEATKPKKKSPAKKAAKAAEPAPQPEQPDTPALGGEQAELTAES. Basic residues predominate over residues 124–134; that stretch reads PKKKSPAKKAA.

The protein belongs to the bacterial ribosomal protein bS16 family.

This Mycobacterium tuberculosis (strain ATCC 25177 / H37Ra) protein is Small ribosomal subunit protein bS16.